The following is a 151-amino-acid chain: Single-stranded DNA-binding protein, mitochondrial (151 aa).

A mitochondrion-targeting transit peptide spans 1-16; sequence MFRRPVLQVFRQFVRQ. One can recognise an SSB domain in the interval 30–141; that stretch reads LNRVQLLGRV…IIADNIIFLS (112 aa). Phosphoserine is present on residues S67 and S79. The residue at position 113 (K113) is an N6-acetyllysine. K122 carries the N6-succinyllysine modification.

In terms of assembly, homotetramer. Interacts with MPG/AAG, through inhibition of its glycosylase activity it potentially prevents formation of DNA breaks in ssDNA, ensuring that base removal primarily occurs in dsDNA. Interacts with POLDIP2. Interacts with PRIMPOL.

The protein resides in the mitochondrion. Its subcellular location is the mitochondrion matrix. It is found in the mitochondrion nucleoid. Binds preferentially and cooperatively to pyrimidine rich single-stranded DNA (ss-DNA). In vitro, required to maintain the copy number of mitochondrial DNA (mtDNA) and plays a crucial role during mtDNA replication by stimulating the activity of the replisome components POLG and TWNK at the replication fork. Promotes the activity of the gamma complex polymerase POLG, largely by organizing the template DNA and eliminating secondary structures to favor ss-DNA conformations that facilitate POLG activity. In addition it is able to promote the 5'-3' unwinding activity of the mtDNA helicase TWNK. May also function in mtDNA repair. The sequence is that of Single-stranded DNA-binding protein, mitochondrial (Ssbp1) from Rattus norvegicus (Rat).